The following is a 311-amino-acid chain: Protein lifeguard 3 (311 aa).

Disordered stretches follow at residues 1-37 and 50-72; these read MSNP…GGYP and PAGY…PGHG. Positions 53–62 are enriched in pro residues; sequence YPQPMPPTHP. Residues Ser81 and Ser83 each carry the phosphoserine modification. The next 7 helical transmembrane spans lie at 110–130, 134–154, 165–185, 190–210, 221–241, 246–266, and 286–306; these read LLIT…SAFV, VAVY…LACC, IILL…ISSM, AVII…IFCF, GLFC…SIVL, VYWL…LFLA, and ITGA…VLQL.

Belongs to the BI1 family. LFG subfamily.

The protein localises to the membrane. It is found in the lysosome membrane. The protein resides in the endosome membrane. Negatively regulates aortic matrix metalloproteinase-9 (MMP9) production and may play a protective role in vascular remodeling. This Homo sapiens (Human) protein is Protein lifeguard 3 (TMBIM1).